A 138-amino-acid polypeptide reads, in one-letter code: Small ribosomal subunit protein uS11c (138 aa).

Residues Met1–Asn21 are disordered. Residues Gly9–Asn21 are compositionally biased toward basic residues.

This sequence belongs to the universal ribosomal protein uS11 family. In terms of assembly, part of the 30S ribosomal subunit.

The protein resides in the plastid. It localises to the chloroplast. This chain is Small ribosomal subunit protein uS11c, found in Calycanthus floridus var. glaucus (Eastern sweetshrub).